The following is a 119-amino-acid chain: Large ribosomal subunit protein bL20 (119 aa).

This sequence belongs to the bacterial ribosomal protein bL20 family.

Binds directly to 23S ribosomal RNA and is necessary for the in vitro assembly process of the 50S ribosomal subunit. It is not involved in the protein synthesizing functions of that subunit. The polypeptide is Large ribosomal subunit protein bL20 (Clostridium tetani (strain Massachusetts / E88)).